A 380-amino-acid chain; its full sequence is Putative T-box protein 40 (380 aa).

A DNA-binding region (T-box) is located at residues 11–192 (MAEEDRWLTQ…KNATFENRLD (182 aa)). Residues 188-215 (ENRLDGGNKRKNTNSREEPSSKRSKNET) are disordered. Residues 189-215 (NRLDGGNKRKNTNSREEPSSKRSKNET) show a composition bias toward basic and acidic residues.

The protein localises to the nucleus. The polypeptide is Putative T-box protein 40 (tbx-40) (Caenorhabditis elegans).